We begin with the raw amino-acid sequence, 276 residues long: ATP synthase subunit a 2 (276 aa).

The next 5 membrane-spanning stretches (helical) occupy residues 45–65, 105–125, 154–173, 226–246, and 247–267; these read AVHV…VWLF, VIAP…LMDL, VNVT…YYSI, LLFI…SVPW, and AIFH…LTIV.

This sequence belongs to the ATPase A chain family. In terms of assembly, F-type ATPases have 2 components, CF(1) - the catalytic core - and CF(0) - the membrane proton channel. CF(1) has five subunits: alpha(3), beta(3), gamma(1), delta(1), epsilon(1). CF(0) has three main subunits: a(1), b(2) and c(9-12). The alpha and beta chains form an alternating ring which encloses part of the gamma chain. CF(1) is attached to CF(0) by a central stalk formed by the gamma and epsilon chains, while a peripheral stalk is formed by the delta and b chains.

Its subcellular location is the cell inner membrane. Key component of the proton channel; it plays a direct role in the translocation of protons across the membrane. The sequence is that of ATP synthase subunit a 2 from Hahella chejuensis (strain KCTC 2396).